Here is a 226-residue protein sequence, read N- to C-terminus: Thymidylate kinase (226 aa).

9-16 (GPEGSGKS) provides a ligand contact to ATP.

It belongs to the thymidylate kinase family.

The catalysed reaction is dTMP + ATP = dTDP + ADP. Its function is as follows. Phosphorylation of dTMP to form dTDP in both de novo and salvage pathways of dTTP synthesis. The protein is Thymidylate kinase of Roseiflexus sp. (strain RS-1).